Here is a 505-residue protein sequence, read N- to C-terminus: Protein DETOXIFICATION 50 (505 aa).

12 helical membrane-spanning segments follow: residues 46-66 (LVLT…FLGG), 78-98 (AAAF…MGVE), 121-141 (IILL…MEKI), 155-175 (AHIF…LHPL), 194-214 (IASF…GLGI), 219-239 (LSGV…ICFF), 275-295 (ISVC…GFLL), 305-325 (GILI…SLGV), 344-364 (AAIV…AFTV), 380-400 (IMKL…GNCP), 424-444 (AFYA…GFGF), and 446-466 (GLWL…MAAT).

Belongs to the multi antimicrobial extrusion (MATE) (TC 2.A.66.1) family. Preferentially expressed in rosette leaves. Detected mainly in the vascular tissues and guard cells. Mostly detected at reproductive stages in young anthers, in mature pollens and during pollen germination on the pistil. Also expressed in developing seeds.

It localises to the cell membrane. The protein localises to the late endosome membrane. In terms of biological role, functions as a multidrug and toxin extrusion transporter in the export of abscisic acid (ABA) in guard cells. Plays a role in ABA-mediated growth inhibition and responses to drought conditions. May act as a negative regulator of hypocotyl cell elongation in the light. The chain is Protein DETOXIFICATION 50 from Arabidopsis thaliana (Mouse-ear cress).